The sequence spans 379 residues: Cytochrome b (379 aa).

The next 4 helical transmembrane spans lie at 33 to 53 (FGSL…FLAM), 77 to 98 (WLIR…FIHV), 113 to 133 (WNIG…GYVL), and 178 to 198 (FFAF…VHLL). His83 and His97 together coordinate heme b. Residues His182 and His196 each coordinate heme b. His201 is an a ubiquinone binding site. A run of 4 helical transmembrane segments spans residues 226–246 (IKDL…ALFF), 288–308 (LGGV…PLLN), 320–340 (ITQT…WIGG), and 347–367 (FTMI…ILMP).

Belongs to the cytochrome b family. In terms of assembly, the cytochrome bc1 complex contains 11 subunits: 3 respiratory subunits (MT-CYB, CYC1 and UQCRFS1), 2 core proteins (UQCRC1 and UQCRC2) and 6 low-molecular weight proteins (UQCRH/QCR6, UQCRB/QCR7, UQCRQ/QCR8, UQCR10/QCR9, UQCR11/QCR10 and a cleavage product of UQCRFS1). This cytochrome bc1 complex then forms a dimer. Heme b is required as a cofactor.

The protein localises to the mitochondrion inner membrane. Its function is as follows. Component of the ubiquinol-cytochrome c reductase complex (complex III or cytochrome b-c1 complex) that is part of the mitochondrial respiratory chain. The b-c1 complex mediates electron transfer from ubiquinol to cytochrome c. Contributes to the generation of a proton gradient across the mitochondrial membrane that is then used for ATP synthesis. In Akodon dolores (Dolorous grass mouse), this protein is Cytochrome b (MT-CYB).